A 72-amino-acid polypeptide reads, in one-letter code: UPF0346 protein EF_1680 (72 aa).

The protein belongs to the UPF0346 family.

This Enterococcus faecalis (strain ATCC 700802 / V583) protein is UPF0346 protein EF_1680.